A 190-amino-acid polypeptide reads, in one-letter code: MAREPREGRGGREREADDIIDKLVTINRVAKVVKGGRRFAFAALVVVGDQKGRVGYGAGKAREVPEAIRKATERAKRSMIRVPMKEGRTLHHDVYGHFGAGKVVLRSATAGTGIIAGGPMRAVFESLGIGDVVAKSLGSRNPHNMVKATFAALERCSSPRSVASRRGKKVSDILGRREPVAGQEGEEAHA.

In terms of domain architecture, S5 DRBM spans 19 to 82 (IIDKLVTINR…ERAKRSMIRV (64 aa)). The segment at 161 to 190 (SVASRRGKKVSDILGRREPVAGQEGEEAHA) is disordered. Residues 169 to 179 (KVSDILGRREP) show a composition bias toward basic and acidic residues.

Belongs to the universal ribosomal protein uS5 family. Part of the 30S ribosomal subunit. Contacts proteins S4 and S8.

Its function is as follows. With S4 and S12 plays an important role in translational accuracy. In terms of biological role, located at the back of the 30S subunit body where it stabilizes the conformation of the head with respect to the body. This Granulibacter bethesdensis (strain ATCC BAA-1260 / CGDNIH1) protein is Small ribosomal subunit protein uS5.